The sequence spans 450 residues: Probable cysteine protease ATG4 (450 aa).

Cys-122 (nucleophile) is an active-site residue. Catalysis depends on residues Asp-297 and His-299.

It belongs to the peptidase C54 family.

It is found in the cytoplasm. Its subcellular location is the nucleus. The protein localises to the preautophagosomal structure. The catalysed reaction is [protein]-C-terminal L-amino acid-glycyl-phosphatidylethanolamide + H2O = [protein]-C-terminal L-amino acid-glycine + a 1,2-diacyl-sn-glycero-3-phosphoethanolamine. Its function is as follows. Cysteine protease that plays a key role in cytoplasm to vacuole transport (Cvt) and autophagy by mediating both proteolytic activation and delipidation of ATG8. Required for selective autophagic degradation of the nucleus (nucleophagy) as well as for mitophagy which contributes to regulate mitochondrial quantity and quality by eliminating the mitochondria to a basal level to fulfill cellular energy requirements and preventing excess ROS production. The protease activity is required for proteolytic activation of ATG8: cleaves the C-terminal amino acid of ATG8 to reveal a C-terminal glycine. ATG8 ubiquitin-like activity requires the exposure of the glycine at the C-terminus for its conjugation to phosphatidylethanolamine (PE) and its insertion to membranes, which is necessary for autophagy. The ATG8-PE conjugate mediates tethering between adjacent membranes and stimulates membrane hemifusion, leading to expansion of the autophagosomal membrane during autophagy. In addition to the protease activity, also catalyzes deconjugation of PE-conjugated forms of ATG8 during macroautophagy: ATG8 delipidation is required to release the protein from membranes, which facilitates multiple events during macroautophagy, and especially for efficient autophagosome biogenesis, the assembly of ATG9-containing tubulovesicular clusters into phagophores/autophagosomes, and for the disassembly of PAS-associated ATG components. ATG8 delipidation by ATG4 also recycles ATG8-PE generated on inappropriate membranes to maintain a reservoir of unlipidated ATG8 that is required for autophagosome formation at the PAS. The protein is Probable cysteine protease ATG4 (ATG4) of Kluyveromyces lactis (strain ATCC 8585 / CBS 2359 / DSM 70799 / NBRC 1267 / NRRL Y-1140 / WM37) (Yeast).